The sequence spans 60 residues: Large ribosomal subunit protein bL32 (60 aa).

Over residues 1–19 the composition is skewed to basic residues; that stretch reads MGVPKRKTSKGRRDKRRAH. The tract at residues 1-20 is disordered; that stretch reads MGVPKRKTSKGRRDKRRAHL.

It belongs to the bacterial ribosomal protein bL32 family.

This chain is Large ribosomal subunit protein bL32, found in Syntrophobacter fumaroxidans (strain DSM 10017 / MPOB).